The following is a 122-amino-acid chain: Small ribosomal subunit protein uS12c (122 aa).

Belongs to the universal ribosomal protein uS12 family. As to quaternary structure, part of the 30S ribosomal subunit.

It is found in the plastid. It localises to the chloroplast. With S4 and S5 plays an important role in translational accuracy. Located at the interface of the 30S and 50S subunits. This chain is Small ribosomal subunit protein uS12c (rps12), found in Illicium oligandrum (Star anise).